The sequence spans 768 residues: C-type polyheme cytochrome OmcC (768 aa).

The signal sequence occupies residues 1–23 (MSRKVTKYSAVLAVSLFAAALAG). Residue cysteine 24 is the site of N-palmitoyl cysteine attachment. A lipid anchor (S-diacylglycerol cysteine) is attached at cysteine 24. Positions 48, 51, 52, 80, 83, 84, 112, 115, 116, 148, 151, 152, 193, 196, 197, 238, 241, 242, 320, 323, 324, 405, 408, 409, 454, 457, 458, 504, 507, 508, 579, 582, 583, 611, 614, and 615 each coordinate heme c.

Binds 12 heme c groups per subunit.

It localises to the cell outer membrane. Its function is as follows. Not involved in Fe(3+) reduction. The polypeptide is C-type polyheme cytochrome OmcC (omcC) (Geobacter sulfurreducens (strain ATCC 51573 / DSM 12127 / PCA)).